The chain runs to 303 residues: Oxygen-dependent coproporphyrinogen-III oxidase (303 aa).

Ser93 contacts substrate. A divalent metal cation-binding residues include His97 and His107. The active-site Proton donor is His107. Residue 109 to 111 (NVR) participates in substrate binding. 2 residues coordinate a divalent metal cation: His149 and His179. Positions 244–279 (YVEFNLVFDRGTLFGLQSGGRTESILLSMPPLAQWR) are important for dimerization. 262-264 (GGR) is a binding site for substrate.

Belongs to the aerobic coproporphyrinogen-III oxidase family. As to quaternary structure, homodimer. A divalent metal cation serves as cofactor.

The protein resides in the cytoplasm. It catalyses the reaction coproporphyrinogen III + O2 + 2 H(+) = protoporphyrinogen IX + 2 CO2 + 2 H2O. Its pathway is porphyrin-containing compound metabolism; protoporphyrin-IX biosynthesis; protoporphyrinogen-IX from coproporphyrinogen-III (O2 route): step 1/1. In terms of biological role, involved in the heme biosynthesis. Catalyzes the aerobic oxidative decarboxylation of propionate groups of rings A and B of coproporphyrinogen-III to yield the vinyl groups in protoporphyrinogen-IX. This chain is Oxygen-dependent coproporphyrinogen-III oxidase, found in Bordetella pertussis (strain Tohama I / ATCC BAA-589 / NCTC 13251).